The sequence spans 132 residues: Small ribosomal subunit protein uS11 (132 aa).

Positions 110–132 (IEDVTPVPSDSTRRKGGRRGRRL) are disordered. The span at 123–132 (RKGGRRGRRL) shows a compositional bias: basic residues.

It belongs to the universal ribosomal protein uS11 family. Component of the small ribosomal subunit. Mature ribosomes consist of a small (40S) and a large (60S) subunit. The 40S subunit contains about 32 different proteins and 1 molecule of RNA (18S). The 60S subunit contains 45 different proteins and 3 molecules of RNA (25S, 5.8S and 5S).

The protein localises to the cytoplasm. Its function is as follows. Component of the ribosome, a large ribonucleoprotein complex responsible for the synthesis of proteins in the cell. The small ribosomal subunit (SSU) binds messenger RNAs (mRNAs) and translates the encoded message by selecting cognate aminoacyl-transfer RNA (tRNA) molecules. The large subunit (LSU) contains the ribosomal catalytic site termed the peptidyl transferase center (PTC), which catalyzes the formation of peptide bonds, thereby polymerizing the amino acids delivered by tRNAs into a polypeptide chain. The nascent polypeptides leave the ribosome through a tunnel in the LSU and interact with protein factors that function in enzymatic processing, targeting, and the membrane insertion of nascent chains at the exit of the ribosomal tunnel. RPS14B is involved in nucleolar processing of pre-18S ribosomal RNA and ribosome assembly. This is Small ribosomal subunit protein uS11 (RPS14B) from Candida albicans (strain SC5314 / ATCC MYA-2876) (Yeast).